Here is a 270-residue protein sequence, read N- to C-terminus: Type III pantothenate kinase (270 aa).

ATP is bound at residue 16–23; the sequence is EIGNTTAM. Substrate is bound by residues Tyr-106 and 113 to 116; that span reads GADR. Residue Asp-115 is the Proton acceptor of the active site. Asp-136 is a K(+) binding site. Position 139 (Thr-139) interacts with ATP. Substrate is bound at residue Thr-191.

The protein belongs to the type III pantothenate kinase family. Homodimer. NH4(+) serves as cofactor. The cofactor is K(+).

Its subcellular location is the cytoplasm. The enzyme catalyses (R)-pantothenate + ATP = (R)-4'-phosphopantothenate + ADP + H(+). It participates in cofactor biosynthesis; coenzyme A biosynthesis; CoA from (R)-pantothenate: step 1/5. Catalyzes the phosphorylation of pantothenate (Pan), the first step in CoA biosynthesis. The protein is Type III pantothenate kinase of Chlorobium luteolum (strain DSM 273 / BCRC 81028 / 2530) (Pelodictyon luteolum).